The chain runs to 483 residues: Glutamyl-tRNA(Gln) amidotransferase subunit A (483 aa).

Active-site charge relay system residues include Lys76 and Ser151. The Acyl-ester intermediate role is filled by Ser175.

Belongs to the amidase family. GatA subfamily. Heterotrimer of A, B and C subunits.

It carries out the reaction L-glutamyl-tRNA(Gln) + L-glutamine + ATP + H2O = L-glutaminyl-tRNA(Gln) + L-glutamate + ADP + phosphate + H(+). Its function is as follows. Allows the formation of correctly charged Gln-tRNA(Gln) through the transamidation of misacylated Glu-tRNA(Gln) in organisms which lack glutaminyl-tRNA synthetase. The reaction takes place in the presence of glutamine and ATP through an activated gamma-phospho-Glu-tRNA(Gln). This is Glutamyl-tRNA(Gln) amidotransferase subunit A from Coxiella burnetii (strain CbuK_Q154) (Coxiella burnetii (strain Q154)).